An 83-amino-acid polypeptide reads, in one-letter code: Large ribosomal subunit protein bL27 (83 aa).

The protein belongs to the bacterial ribosomal protein bL27 family.

In Bifidobacterium adolescentis (strain ATCC 15703 / DSM 20083 / NCTC 11814 / E194a), this protein is Large ribosomal subunit protein bL27.